The primary structure comprises 71 residues: Large ribosomal subunit protein bL31 (71 aa).

Zn(2+)-binding residues include Cys-16, Cys-18, Cys-38, and Cys-41.

Belongs to the bacterial ribosomal protein bL31 family. Type A subfamily. In terms of assembly, part of the 50S ribosomal subunit. It depends on Zn(2+) as a cofactor.

In terms of biological role, binds the 23S rRNA. The chain is Large ribosomal subunit protein bL31 from Chromobacterium violaceum (strain ATCC 12472 / DSM 30191 / JCM 1249 / CCUG 213 / NBRC 12614 / NCIMB 9131 / NCTC 9757 / MK).